A 101-amino-acid polypeptide reads, in one-letter code: Small ribosomal subunit protein uS14 (101 aa).

The protein belongs to the universal ribosomal protein uS14 family. As to quaternary structure, part of the 30S ribosomal subunit. Contacts proteins S3 and S10.

Binds 16S rRNA, required for the assembly of 30S particles and may also be responsible for determining the conformation of the 16S rRNA at the A site. The sequence is that of Small ribosomal subunit protein uS14 from Shewanella woodyi (strain ATCC 51908 / MS32).